The chain runs to 906 residues: UPF0182 protein CA_C0010 (906 aa).

7 consecutive transmembrane segments (helical) span residues 7 to 29, 47 to 69, 96 to 118, 153 to 175, 208 to 230, 250 to 272, and 279 to 301; these read IVTI…DFII, LAAI…WFYY, VAIV…VYWY, LYGV…YIVL, FAII…SFNL, LVFY…TSII, and IFVS…EIVQ. Residues 842–862 are compositionally biased toward low complexity; it reads NSSNNQSETRTETGGTSTDSS. A disordered region spans residues 842-875; the sequence is NSSNNQSETRTETGGTSTDSSNNKDKLKQAQDLY.

This sequence belongs to the UPF0182 family.

It localises to the cell membrane. This Clostridium acetobutylicum (strain ATCC 824 / DSM 792 / JCM 1419 / IAM 19013 / LMG 5710 / NBRC 13948 / NRRL B-527 / VKM B-1787 / 2291 / W) protein is UPF0182 protein CA_C0010.